The primary structure comprises 362 residues: Protein mab-21-like 3 (362 aa).

This sequence belongs to the mab-21 family.

The chain is Protein mab-21-like 3 (MAB21L3) from Homo sapiens (Human).